The sequence spans 111 residues: UPF0145 protein BMA10229_A0446 (111 aa).

It belongs to the UPF0145 family.

The polypeptide is UPF0145 protein BMA10229_A0446 (Burkholderia mallei (strain NCTC 10229)).